Consider the following 135-residue polypeptide: Large ribosomal subunit protein mL61 (135 aa).

The span at 114 to 129 (HHESSPENIKEAHKQD) shows a compositional bias: basic and acidic residues. A disordered region spans residues 114–135 (HHESSPENIKEAHKQDYSPPSN).

Belongs to the mitochondrion-specific ribosomal protein mL61 family. As to quaternary structure, component of the mitochondrial large ribosomal subunit (mt-LSU). Mature yeast 74S mitochondrial ribosomes consist of a small (37S) and a large (54S) subunit. The 37S small subunit contains a 15S ribosomal RNA (15S mt-rRNA) and at least 32 different proteins. The 54S large subunit contains a 21S rRNA (21S mt-rRNA) and at least 45 different proteins.

The protein localises to the mitochondrion. In terms of biological role, component of the mitochondrial ribosome (mitoribosome), a dedicated translation machinery responsible for the synthesis of mitochondrial genome-encoded proteins, including at least some of the essential transmembrane subunits of the mitochondrial respiratory chain. The mitoribosomes are attached to the mitochondrial inner membrane and translation products are cotranslationally integrated into the membrane. mL61 is not essential in cells grown at 30 degrees Celsius but is required for mitochondrial translation in cells grown at 18 degrees Celsius. This is Large ribosomal subunit protein mL61 (mrp49) from Schizosaccharomyces pombe (strain 972 / ATCC 24843) (Fission yeast).